The primary structure comprises 189 residues: 7-methyl-GTP pyrophosphatase (189 aa).

Asp71 acts as the Proton acceptor in catalysis.

This sequence belongs to the Maf family. YceF subfamily. A divalent metal cation serves as cofactor.

Its subcellular location is the cytoplasm. The catalysed reaction is N(7)-methyl-GTP + H2O = N(7)-methyl-GMP + diphosphate + H(+). Its function is as follows. Nucleoside triphosphate pyrophosphatase that hydrolyzes 7-methyl-GTP (m(7)GTP). May have a dual role in cell division arrest and in preventing the incorporation of modified nucleotides into cellular nucleic acids. This is 7-methyl-GTP pyrophosphatase from Bdellovibrio bacteriovorus (strain ATCC 15356 / DSM 50701 / NCIMB 9529 / HD100).